A 706-amino-acid chain; its full sequence is GDNF-inducible zinc finger protein 1 (706 aa).

The region spanning 31–103 is the BTB domain; sequence CDVTVSIENQ…VYTAKVRVEE (73 aa). Positions 149-165 are enriched in polar residues; it reads VEASSGPQVSVTPSSKA. Disordered regions lie at residues 149-220 and 242-308; these read VEAS…PKIR and RRLR…KDGE. Basic and acidic residues-rich tracts occupy residues 197-212 and 242-277; these read PSKKCKEKLDKKKDVA and RRLREQQKSAEEAAENDKCPQDQSPDNERMETEPAA. C2H2-type zinc fingers lie at residues 315-337, 346-369, 375-398, 405-427, 433-455, 461-483, 489-511, 517-539, 545-567, and 573-595; these read FQCTVCDKAFLYEKSFLKHIKYH, YRCDTCGQTFANRCNLKSHQRHVH, FPCEMCAKKFKRKKDVKRHVLQVH, HRCGQCGKGLSSKTALRLHERTH, YGCTKCDAKFSQPSALKTHLRVH, FVCDECGARFTQNHMLIYHKRCH, FMCETCGKSFASKEYLKHHNRIH, FKCEVCLRTFAQRNSLYQHIKVH, YCCDQCGKQFTQVNALQRHHRIH, and YMCNACGRTFTDKSTLRRHTSIH. Serine 611 is subject to Phosphoserine.

It belongs to the krueppel C2H2-type zinc-finger protein family. In terms of assembly, interacts with NCL. Expressed in several tissues, with highest levels in liver. Also expressed in embryos from 7 to 17 dpc.

Its subcellular location is the nucleus. It localises to the cytoplasm. The protein localises to the nucleolus. In terms of biological role, transcriptional repressor that binds the GZF1 responsive element (GRE) (consensus: 5'-TGCGCN[TG][CA]TATA-3'). May be regulating VSX2/HOX10 expression. This is GDNF-inducible zinc finger protein 1 from Mus musculus (Mouse).